We begin with the raw amino-acid sequence, 281 residues long: Urease accessory protein UreD (281 aa).

The tract at residues 1 to 25 (MLNTLEPQPCETDALSPRLQRSTGS) is disordered.

Belongs to the UreD family. As to quaternary structure, ureD, UreF and UreG form a complex that acts as a GTP-hydrolysis-dependent molecular chaperone, activating the urease apoprotein by helping to assemble the nickel containing metallocenter of UreC. The UreE protein probably delivers the nickel.

Its subcellular location is the cytoplasm. Functionally, required for maturation of urease via the functional incorporation of the urease nickel metallocenter. The polypeptide is Urease accessory protein UreD (Dinoroseobacter shibae (strain DSM 16493 / NCIMB 14021 / DFL 12)).